We begin with the raw amino-acid sequence, 489 residues long: Serine/threonine-protein kinase BSK2 (489 aa).

The disordered stretch occupies residues 1–30; that stretch reads MGCLHSKTANLPSSDDPSAPNKPESVNGDQ. G2 carries the N-myristoyl glycine lipid modification. The span at 7–16 shows a compositional bias: polar residues; that stretch reads KTANLPSSDD. In terms of domain architecture, Protein kinase spans 56 to 322; sequence SCIVSEGGEK…QEEVASHVLM (267 aa). Residues 62–70 and K84 each bind ATP; that span reads GGEKAPNVV. The active-site Proton acceptor is D178.

The protein belongs to the protein kinase superfamily. Ser/Thr protein kinase family. In terms of processing, phosphorylated by BRI1 upon brassinolide (BL) treatment.

Its subcellular location is the cell membrane. It catalyses the reaction L-seryl-[protein] + ATP = O-phospho-L-seryl-[protein] + ADP + H(+). The catalysed reaction is L-threonyl-[protein] + ATP = O-phospho-L-threonyl-[protein] + ADP + H(+). Functionally, probable serine/threonine kinase that acts as a positive regulator of brassinosteroid (BR) signaling downstream of the receptor kinase BRI1. Mediates signal transduction from BRI1 by functioning as substrate of BRI1. The protein is Serine/threonine-protein kinase BSK2 of Arabidopsis thaliana (Mouse-ear cress).